We begin with the raw amino-acid sequence, 342 residues long: Peroxisomal membrane protein import receptor PEX19 (342 aa).

Residues 1 to 18 are compositionally biased toward acidic residues; that stretch reads MNENEYDNFDDLDDLLDE. Disordered regions lie at residues 1-68 and 119-141; these read MNEN…DPEL and CSSLKSNSTDKGTVNGSNPGFKN. The segment covering 41–54 has biased composition (basic and acidic residues); it reads SENKEKNAESKDSD. Phosphoserine is present on Ser62. At Ser304 the chain carries Phosphoserine. The segment at 321–342 is disordered; the sequence is IDGNDPNLGNLDKELTDGCKQQ. A compositionally biased stretch (basic and acidic residues) spans 331-342; sequence LDKELTDGCKQQ. Position 339 is a cysteine methyl ester (Cys339). Residue Cys339 is the site of S-farnesyl cysteine attachment. A propeptide spans 340 to 342 (removed in mature form); sequence KQQ.

The protein belongs to the peroxin-19 family. Interacts (farnesylated) with PEX3; farnesylation is required for this interaction. Interacts with PEX2, PEX5, PEX10, PEX11, PEX12, PEX13, PEX14, PEX17, PEX22, PEX25, PEX30 and PEX32; the interaction requires well-defined PEX19-binding sites within the peroxisomal membrane protein targeting signal (mPTS) of the PMPs and is independent on the presence of PEX3. Interacts with VPS1.

The protein localises to the cytoplasm. It localises to the peroxisome membrane. Its subcellular location is the endoplasmic reticulum membrane. Functionally, required for proper post-translational import and stabilization of peroxisomal membrane proteins (PMPs). Acts as a cytosolic import receptor for PMPs and delivers them to the docking factor PEX3 at the peroxisomal membrane for subsequent insertion into the membrane. Acts as a chaperone in stabilizing or maintaining PMPs in the lipid bilayer. Directs PEX17, a peripheral component of the peroxisomal matrix protein translocation machinery, to peroxisomes. Stabilizes VPS1, a protein required for peroxisomal fission, at the peroxisomal membrane. Also acts in conjunction with PEX3 in the formation of peroxisomes from preperoxisomal compartments at the endoplasmic reticulum during de novo peroxisome synthesis, probably via the import of additional PMPs. In Saccharomyces cerevisiae (strain ATCC 204508 / S288c) (Baker's yeast), this protein is Peroxisomal membrane protein import receptor PEX19 (PEX19).